The chain runs to 153 residues: UPF0756 membrane protein Bcer98_3279 (153 aa).

4 helical membrane passes run 8 to 28 (FLFI…IVAI), 54 to 74 (LGVT…EIGF), 87 to 107 (WIAL…LQLL), and 117 to 137 (LVFG…GPLI).

Belongs to the UPF0756 family.

The protein resides in the cell membrane. The polypeptide is UPF0756 membrane protein Bcer98_3279 (Bacillus cytotoxicus (strain DSM 22905 / CIP 110041 / 391-98 / NVH 391-98)).